A 108-amino-acid chain; its full sequence is ATP-dependent Clp protease adapter protein ClpS (108 aa).

The protein belongs to the ClpS family. As to quaternary structure, binds to the N-terminal domain of the chaperone ClpA.

In terms of biological role, involved in the modulation of the specificity of the ClpAP-mediated ATP-dependent protein degradation. The chain is ATP-dependent Clp protease adapter protein ClpS from Leptospira borgpetersenii serovar Hardjo-bovis (strain JB197).